We begin with the raw amino-acid sequence, 140 residues long: Large ribosomal subunit protein bL17 (140 aa).

It belongs to the bacterial ribosomal protein bL17 family. Part of the 50S ribosomal subunit. Contacts protein L32.

The protein is Large ribosomal subunit protein bL17 of Hyphomonas neptunium (strain ATCC 15444).